Reading from the N-terminus, the 444-residue chain is Homogentisate 1,2-dioxygenase (444 aa).

The active-site Proton acceptor is His-298. His-341 and Glu-347 together coordinate Fe cation. Positions 356 and 377 each coordinate homogentisate. Fe cation is bound at residue His-377.

Belongs to the homogentisate dioxygenase family. As to quaternary structure, hexamer; dimer of trimers. Fe cation serves as cofactor.

The catalysed reaction is homogentisate + O2 = 4-maleylacetoacetate + H(+). It functions in the pathway amino-acid degradation; L-phenylalanine degradation; acetoacetate and fumarate from L-phenylalanine: step 4/6. In terms of biological role, involved in the catabolism of homogentisate (2,5-dihydroxyphenylacetate or 2,5-OH-PhAc), a central intermediate in the degradation of phenylalanine and tyrosine. Catalyzes the oxidative ring cleavage of the aromatic ring of homogentisate to yield maleylacetoacetate. The protein is Homogentisate 1,2-dioxygenase of Burkholderia cenocepacia (strain ATCC BAA-245 / DSM 16553 / LMG 16656 / NCTC 13227 / J2315 / CF5610) (Burkholderia cepacia (strain J2315)).